The following is a 1330-amino-acid chain: Ubinuclein-2 (1330 aa).

Positions 1–133 (MAEPRRVAFI…PRETVRLELV (133 aa)) are disordered. Residue serine 13 is modified to Phosphoserine. Basic and acidic residues-rich tracts occupy residues 16–37 (RRRE…EPPR) and 67–79 (PREK…EVSR). The span at 93–111 (PEPPPPPLPQLHLQPPPPR) shows a compositional bias: pro residues. The segment covering 123–133 (PPRETVRLELV) has biased composition (basic and acidic residues). Residue threonine 244 is modified to Phosphothreonine. Positions 249–304 (QASDTEEDDTTDNQKHKPPKIPKIKEDDIEMKKRKRKEEGEKEKKPRKKVPKQLGV) are disordered. At serine 251 the chain carries Phosphoserine. Threonine 253 carries the phosphothreonine modification. Lysine 273 participates in a covalent cross-link: Glycyl lysine isopeptide (Lys-Gly) (interchain with G-Cter in SUMO2). Residue serine 312 is modified to Phosphoserine. The disordered stretch occupies residues 336–356 (KDALKKESNPKTPLNFSTSSL). The span at 345–356 (PKTPLNFSTSSL) shows a compositional bias: polar residues. Serine 417, serine 420, serine 423, and serine 585 each carry phosphoserine. Disordered regions lie at residues 574 to 597 (FQTD…GKRV), 672 to 730 (LTSA…STPV), 802 to 833 (PKKL…DLAH), 864 to 913 (GLQR…VTKV), 938 to 988 (PVVK…SRTV), 1017 to 1201 (MAAS…GSSV), and 1308 to 1330 (HVQQ…RKSQ). Composition is skewed to basic and acidic residues over residues 575–585 (QTDEEREKNGS) and 688–699 (KVKECSPKKDQK). Residues 701-730 (PASSVASVGGPSTSSSTSAVASTSSGSTPV) are compositionally biased toward low complexity. Residues 807 to 816 (STQTAHSSSL) are compositionally biased toward polar residues. Over residues 864 to 895 (GLQRSSQIHASSSSQTHVSSSSQAQVAASSHT) the composition is skewed to low complexity. Composition is skewed to polar residues over residues 896–913 (LGTS…VTKV) and 938–956 (PVVK…PLTK). The segment covering 1017 to 1029 (MAASPKLASSPKP) has biased composition (low complexity). Over residues 1030-1044 (ATSPKPLPSPKPSAS) the composition is skewed to pro residues. 2 stretches are compositionally biased toward low complexity: residues 1045–1054 (PKPSQSAKPS) and 1061–1079 (SKSN…SSPN). The residue at position 1052 (lysine 1052) is an N6-acetyllysine. Composition is skewed to polar residues over residues 1082–1148 (VAQS…NSLS), 1158–1169 (RGSNLNSSGANR), and 1308–1317 (HVQQTFNDGG). A Phosphoserine modification is found at serine 1107. Lysine 1132 carries the N6-acetyllysine modification. Over residues 1321–1330 (GDTKLPRKSQ) the composition is skewed to basic and acidic residues.

The protein belongs to the ubinuclein family.

The chain is Ubinuclein-2 (UBN2) from Bos taurus (Bovine).